Consider the following 392-residue polypeptide: MKEKTGYYGEFGGRFVPETLMAALYELDSAYHRLKDDPGFKAELNSYLTEFAGRETPLTFCRNMSEYCGCKVYLKREDLVHGGAHKLNNTLGQALLAKAMGKKRLIAETGAGQHGVATAIAGAALNLPVEVFMGEEDCERQKLNVFRMELMGAKVHPVSSGTKTLKDATNEALREWAKTVDYTHYLIGSVVGPHPFPMIVRDFQSVIGEETRRQCLEKEGRLPDTLVACVGGGSNAIGMFYPMLNDDVRMVGVEAGGRALTPGNNGATLNTGSPGILHGALSYLIQNDDGQVGVTHSISAGLDYPGVGPEHSMLKDLNRVEYSYVMDDEVLEAFSYLSRTEGIIPALESAHAVSYVLKNRDSFDRDDIVVICLSGRGDKDVSSVSKMFGGEE.

K86 is modified (N6-(pyridoxal phosphate)lysine).

It belongs to the TrpB family. In terms of assembly, tetramer of two alpha and two beta chains. Requires pyridoxal 5'-phosphate as cofactor.

The catalysed reaction is (1S,2R)-1-C-(indol-3-yl)glycerol 3-phosphate + L-serine = D-glyceraldehyde 3-phosphate + L-tryptophan + H2O. It functions in the pathway amino-acid biosynthesis; L-tryptophan biosynthesis; L-tryptophan from chorismate: step 5/5. In terms of biological role, the beta subunit is responsible for the synthesis of L-tryptophan from indole and L-serine. In Methanocorpusculum labreanum (strain ATCC 43576 / DSM 4855 / Z), this protein is Tryptophan synthase beta chain.